We begin with the raw amino-acid sequence, 473 residues long: MGRTLYDKIFDEHVVHTEEDGTAVLYIDRHLVHEVTSPQAFEGLREAGRKVWRVSSIVATADHNTPTTGWERGYDGIADPISKEQIVTLDKNIQESGAAAFFPFLSKRQGIVHVIGPENGATLPGMTVVCGDSHTSTHGAFGALAHGIGTSEVEHVMATQTLLAKKAKNMLVQVNGKVAPGITAKDIVLAIIGKIGTAGGTGYTIEFAGEAIRDLSMEGRMTVCNMAIEAGARAGLVAVDDKTINYVKGRPLAPTGVEWDQAVAYWKTLHSDADAKFDAVVELNAAEIVPQVTWGTSPEMVLGIDAVVPDPDKEKDPSKRGAIERALTYMGLQPGKPMDDIFVDKVFIGSCTNSRIEDMREAAAVVKKLGQKVAKNIKLAMVVPGSGLVKEQAEREGLDAIFKAAGFEWREPGCSMCLAMNADRLEPGERCASTSNRNFEGRQGAGGRTHLVSPAMAAAAAIHGHFVDIRQFA.

[4Fe-4S] cluster contacts are provided by Cys-351, Cys-414, and Cys-417.

It belongs to the aconitase/IPM isomerase family. LeuC type 1 subfamily. In terms of assembly, heterodimer of LeuC and LeuD. [4Fe-4S] cluster serves as cofactor.

The catalysed reaction is (2R,3S)-3-isopropylmalate = (2S)-2-isopropylmalate. It participates in amino-acid biosynthesis; L-leucine biosynthesis; L-leucine from 3-methyl-2-oxobutanoate: step 2/4. In terms of biological role, catalyzes the isomerization between 2-isopropylmalate and 3-isopropylmalate, via the formation of 2-isopropylmaleate. The polypeptide is 3-isopropylmalate dehydratase large subunit (Acidovorax ebreus (strain TPSY) (Diaphorobacter sp. (strain TPSY))).